A 398-amino-acid polypeptide reads, in one-letter code: Phosphoglycerate kinase (398 aa).

Substrate-binding positions include 21–23 (DFN), arginine 36, 59–62 (HLGR), arginine 119, and arginine 157. ATP is bound by residues lysine 208, glycine 296, glutamate 327, and 354-357 (GGDS).

It belongs to the phosphoglycerate kinase family. Monomer.

It localises to the cytoplasm. It carries out the reaction (2R)-3-phosphoglycerate + ATP = (2R)-3-phospho-glyceroyl phosphate + ADP. The protein operates within carbohydrate degradation; glycolysis; pyruvate from D-glyceraldehyde 3-phosphate: step 2/5. This chain is Phosphoglycerate kinase, found in Streptococcus pneumoniae serotype 2 (strain D39 / NCTC 7466).